The primary structure comprises 473 residues: TOX high mobility group box family member 2 (473 aa).

4 disordered regions span residues 1 to 42, 139 to 211, 277 to 302, and 340 to 473; these read MSDG…SLLH, GLRS…VSAY, SKSP…PPKQ, and LLPG…PSAR. Polar residues predominate over residues 8 to 20; sequence LLSTSQTYNSQGE. The interval 25–63 is required for transcriptional activation; that stretch reads YEIPPITPPNLPEPSLLHLGDHEAGYHSLCHGLAPNGLL. The segment covering 153–164 has biased composition (low complexity); sequence GSKSATPSPSSS. Residues 171–188 are compositionally biased toward basic and acidic residues; the sequence is DAHFKISGEKRPSTDPGK. A Nuclear localization signal motif is present at residues 172–201; sequence AHFKISGEKRPSTDPGKKAKNPKKKKKKDP. A compositionally biased stretch (basic residues) spans 189–199; it reads KAKNPKKKKKK. The segment at residues 204 to 272 is a DNA-binding region (HMG box); sequence PQKPVSAYAL…EYLKALAAYR (69 aa). Composition is skewed to low complexity over residues 373-382 and 415-440; these read LLSPPLSMSP and SDFP…WDGS. The span at 463-473 shows a compositional bias: polar residues; that stretch reads SPKNLQEPSAR.

As to expression, highly expressed in ovary, where it is restricted to undifferentiated granulosa cells. Expressed in hypothalamus, pituitary gland, testis and uterus.

It localises to the nucleus. Putative transcriptional activator involved in the hypothalamo-pituitary-gonadal system. This chain is TOX high mobility group box family member 2 (Tox2), found in Rattus norvegicus (Rat).